The sequence spans 79 residues: Acyl carrier protein (79 aa).

A Carrier domain is found at 4–79 (EQILVDVQEA…DVVAYIETKL (76 aa)). The residue at position 39 (serine 39) is an O-(pantetheine 4'-phosphoryl)serine.

It belongs to the acyl carrier protein (ACP) family. 4'-phosphopantetheine is transferred from CoA to a specific serine of apo-ACP by AcpS. This modification is essential for activity because fatty acids are bound in thioester linkage to the sulfhydryl of the prosthetic group.

It is found in the cytoplasm. It participates in lipid metabolism; fatty acid biosynthesis. In terms of biological role, carrier of the growing fatty acid chain in fatty acid biosynthesis. This Exiguobacterium sp. (strain ATCC BAA-1283 / AT1b) protein is Acyl carrier protein.